The following is a 454-amino-acid chain: Pup--protein ligase (454 aa).

Glu-9 provides a ligand contact to Mg(2+). Arg-53 contributes to the ATP binding site. A Mg(2+)-binding site is contributed by Tyr-55. The active-site Proton acceptor is Asp-57. Residue Glu-63 coordinates Mg(2+). 2 residues coordinate ATP: Thr-66 and Trp-421.

The protein belongs to the Pup ligase/Pup deamidase family. Pup-conjugating enzyme subfamily.

The catalysed reaction is ATP + [prokaryotic ubiquitin-like protein]-L-glutamate + [protein]-L-lysine = ADP + phosphate + N(6)-([prokaryotic ubiquitin-like protein]-gamma-L-glutamyl)-[protein]-L-lysine.. It participates in protein degradation; proteasomal Pup-dependent pathway. It functions in the pathway protein modification; protein pupylation. Functionally, catalyzes the covalent attachment of the prokaryotic ubiquitin-like protein modifier Pup to the proteasomal substrate proteins, thereby targeting them for proteasomal degradation. This tagging system is termed pupylation. The ligation reaction involves the side-chain carboxylate of the C-terminal glutamate of Pup and the side-chain amino group of a substrate lysine. The sequence is that of Pup--protein ligase from Frankia casuarinae (strain DSM 45818 / CECT 9043 / HFP020203 / CcI3).